We begin with the raw amino-acid sequence, 173 residues long: Catabolic 3-dehydroquinase (173 aa).

Tyr26 functions as the Proton acceptor in the catalytic mechanism. Positions 102, 108, and 115 each coordinate substrate. The Proton donor role is filled by His128. Substrate-binding positions include 129–130 (VS) and Arg139.

This sequence belongs to the type-II 3-dehydroquinase family. As to quaternary structure, homododecamer. Adopts a ring-like structure, composed of an arrangement of two hexameric rings stacked on top of one another.

The catalysed reaction is 3-dehydroquinate = 3-dehydroshikimate + H2O. It participates in aromatic compound metabolism; 3,4-dihydroxybenzoate biosynthesis; 3,4-dihydroxybenzoate from 3-dehydroquinate: step 1/2. In terms of biological role, 3-dehydroquinate dehydratase; part of the qa gene cluster that mediates the catabolism of quinic acid (QA) and as such, allows the use of QA as a sole carbon source. Catalyzes the second reaction in the inducible quinic acid catabolic pathway by converting 3-dehydroquinate into 3-dehydroshikimate. The qa cluster encodes 3 inducible enymes (qa-2, qa-3 and qa-4) catalyzing the first three reactions in the catabolism of quinic acid to protocatechuic acid (also known as 3,4-Dihydroxybenzoic acid). In Neurospora crassa (strain ATCC 24698 / 74-OR23-1A / CBS 708.71 / DSM 1257 / FGSC 987), this protein is Catabolic 3-dehydroquinase.